The sequence spans 200 residues: 3-isopropylmalate dehydratase small subunit (200 aa).

The protein belongs to the LeuD family. LeuD type 1 subfamily. In terms of assembly, heterodimer of LeuC and LeuD.

It carries out the reaction (2R,3S)-3-isopropylmalate = (2S)-2-isopropylmalate. It functions in the pathway amino-acid biosynthesis; L-leucine biosynthesis; L-leucine from 3-methyl-2-oxobutanoate: step 2/4. In terms of biological role, catalyzes the isomerization between 2-isopropylmalate and 3-isopropylmalate, via the formation of 2-isopropylmaleate. The sequence is that of 3-isopropylmalate dehydratase small subunit from Actinobacillus pleuropneumoniae serotype 7 (strain AP76).